The chain runs to 447 residues: N-succinylarginine dihydrolase (447 aa).

Substrate contacts are provided by residues 19 to 28 (AGLSFGNEAS), Asn110, and 137 to 138 (HR). Glu174 is a catalytic residue. Arg214 is a binding site for substrate. The active site involves His250. Residues Asp252 and Asn365 each coordinate substrate. The active-site Nucleophile is the Cys371.

The protein belongs to the succinylarginine dihydrolase family. In terms of assembly, homodimer.

The catalysed reaction is N(2)-succinyl-L-arginine + 2 H2O + 2 H(+) = N(2)-succinyl-L-ornithine + 2 NH4(+) + CO2. Its pathway is amino-acid degradation; L-arginine degradation via AST pathway; L-glutamate and succinate from L-arginine: step 2/5. Catalyzes the hydrolysis of N(2)-succinylarginine into N(2)-succinylornithine, ammonia and CO(2). The sequence is that of N-succinylarginine dihydrolase from Acinetobacter baumannii (strain SDF).